Reading from the N-terminus, the 141-residue chain is Nucleoside diphosphate kinase (141 aa).

Residues K11, F59, R87, T93, R104, and N114 each coordinate ATP. The Pros-phosphohistidine intermediate role is filled by H117.

The protein belongs to the NDK family. Homotetramer. Mg(2+) serves as cofactor.

It localises to the cytoplasm. It catalyses the reaction a 2'-deoxyribonucleoside 5'-diphosphate + ATP = a 2'-deoxyribonucleoside 5'-triphosphate + ADP. The catalysed reaction is a ribonucleoside 5'-diphosphate + ATP = a ribonucleoside 5'-triphosphate + ADP. Its function is as follows. Major role in the synthesis of nucleoside triphosphates other than ATP. The ATP gamma phosphate is transferred to the NDP beta phosphate via a ping-pong mechanism, using a phosphorylated active-site intermediate. The protein is Nucleoside diphosphate kinase of Xylella fastidiosa (strain 9a5c).